The following is a 441-amino-acid chain: MEQPQEEAPEVREEEEKEEVAEAEGAPELNGGPQHALPSSSYTDLSRSSSPPSLLDQLQMGCDGASCGSLNMECRVCGDKASGFHYGVHACEGCKGFFRRTIRMKLEYEKCERSCKIQKKNRNKCQYCRFQKCLALGMSHNAIRFGRMPEAEKRKLVAGLTANEGSQYNPQVADLKAFSKHIYNAYLKNFNMTKKKARSILTGKASHTAPFVIHDIETLWQAEKGLVWKQLVNGLPPYKEISVHVFYRCQCTTVETVRELTEFAKSIPSFSSLFLNDQVTLLKYGVHEAIFAMLASIVNKDGLLVANGSGFVTREFLRSLRKPFSDIIEPKFEFAVKFNALELDDSDLALFIAAIILCGDRPGLMNVPRVEAIQDTILRALEFHLQANHPDAQYLFPKLLQKMADLRQLVTEHAQMMQRIKKTETETSLHPLLQEIYKDMY.

Over residues 1-22 the composition is skewed to acidic residues; the sequence is MEQPQEEAPEVREEEEKEEVAE. A disordered region spans residues 1–54; sequence MEQPQEEAPEVREEEEKEEVAEAEGAPELNGGPQHALPSSSYTDLSRSSSPPSL. A compositionally biased stretch (low complexity) spans 37–54; the sequence is LPSSSYTDLSRSSSPPSL. A DNA-binding region (nuclear receptor) is located at residues 71 to 145; that stretch reads NMECRVCGDK…LGMSHNAIRF (75 aa). 2 consecutive NR C4-type zinc fingers follow at residues 74–94 and 111–133; these read CRVC…CEGC and CERS…FQKC. Positions 211-439 constitute an NR LBD domain; the sequence is FVIHDIETLW…HPLLQEIYKD (229 aa).

Belongs to the nuclear hormone receptor family. NR1 subfamily. As to quaternary structure, heterodimer with the retinoid X receptor. Interacts (via domain NR LBD) with CRY1 and CRY2 in a ligand-dependent manner. In terms of processing, 'Lys-48'-linked polyubiquitinated; leading to proteasomal degradation. Deubiquitinated and stabilized by OTUD3. In terms of tissue distribution, ubiquitous with maximal levels in placenta and skeletal muscle.

The protein localises to the nucleus. Its function is as follows. Ligand-activated transcription factor key mediator of energy metabolism in adipose tissues. Receptor that binds peroxisome proliferators such as hypolipidemic drugs and fatty acids. Has a preference for poly-unsaturated fatty acids, such as gamma-linoleic acid and eicosapentanoic acid. Once activated by a ligand, the receptor binds to promoter elements of target genes. Regulates the peroxisomal beta-oxidation pathway of fatty acids. Functions as transcription activator for the acyl-CoA oxidase gene. Decreases expression of NPC1L1 once activated by a ligand. In Homo sapiens (Human), this protein is Peroxisome proliferator-activated receptor delta.